The sequence spans 481 residues: Argininosuccinate lyase (481 aa).

The protein belongs to the lyase 1 family. Argininosuccinate lyase subfamily.

Its subcellular location is the cytoplasm. The catalysed reaction is 2-(N(omega)-L-arginino)succinate = fumarate + L-arginine. It functions in the pathway amino-acid biosynthesis; L-arginine biosynthesis; L-arginine from L-ornithine and carbamoyl phosphate: step 3/3. This is Argininosuccinate lyase from Methanococcus maripaludis (strain C7 / ATCC BAA-1331).